Consider the following 174-residue polypeptide: Dual-action ribosomal maturation protein DarP (174 aa).

Belongs to the DarP family.

The protein resides in the cytoplasm. Its function is as follows. Member of a network of 50S ribosomal subunit biogenesis factors which assembles along the 30S-50S interface, preventing incorrect 23S rRNA structures from forming. Promotes peptidyl transferase center (PTC) maturation. This is Dual-action ribosomal maturation protein DarP from Vibrio atlanticus (strain LGP32) (Vibrio splendidus (strain Mel32)).